Here is a 261-residue protein sequence, read N- to C-terminus: Ribosomal RNA small subunit methyltransferase A (261 aa).

Asn15, Ile17, Gly42, Glu64, Asp90, and Asn109 together coordinate S-adenosyl-L-methionine.

The protein belongs to the class I-like SAM-binding methyltransferase superfamily. rRNA adenine N(6)-methyltransferase family. RsmA subfamily.

Its subcellular location is the cytoplasm. The catalysed reaction is adenosine(1518)/adenosine(1519) in 16S rRNA + 4 S-adenosyl-L-methionine = N(6)-dimethyladenosine(1518)/N(6)-dimethyladenosine(1519) in 16S rRNA + 4 S-adenosyl-L-homocysteine + 4 H(+). In terms of biological role, specifically dimethylates two adjacent adenosines (A1518 and A1519) in the loop of a conserved hairpin near the 3'-end of 16S rRNA in the 30S particle. May play a critical role in biogenesis of 30S subunits. The chain is Ribosomal RNA small subunit methyltransferase A from Wolbachia sp. subsp. Brugia malayi (strain TRS).